A 113-amino-acid polypeptide reads, in one-letter code: Guanylate cyclase activator 2B (113 aa).

An N-terminal signal peptide occupies residues 1 to 27 (MASRAAAGLLLCGVALVFLVLLQGTQS). A propeptide spanning residues 28 to 97 (VYIQYQGFRV…SIFQALRTIA (70 aa)) is cleaved from the precursor. Cystine bridges form between cysteine 68-cysteine 81, cysteine 101-cysteine 109, and cysteine 104-cysteine 112.

Belongs to the guanylin family.

It localises to the secreted. Its function is as follows. Endogenous activator of intestinal guanylate cyclase. It stimulates this enzyme through the same receptor binding region as the heat-stable enterotoxins. May be a potent physiological regulator of intestinal fluid and electrolyte transport. May be an autocrine/paracrine regulator of intestinal salt and water transport. This chain is Guanylate cyclase activator 2B (GUCA2B), found in Sus scrofa (Pig).